The sequence spans 373 residues: 4-hydroxy-3-methylbut-2-en-1-yl diphosphate synthase (flavodoxin) (373 aa).

[4Fe-4S] cluster is bound by residues cysteine 270, cysteine 273, cysteine 305, and glutamate 312.

The protein belongs to the IspG family. The cofactor is [4Fe-4S] cluster.

The catalysed reaction is (2E)-4-hydroxy-3-methylbut-2-enyl diphosphate + oxidized [flavodoxin] + H2O + 2 H(+) = 2-C-methyl-D-erythritol 2,4-cyclic diphosphate + reduced [flavodoxin]. The protein operates within isoprenoid biosynthesis; isopentenyl diphosphate biosynthesis via DXP pathway; isopentenyl diphosphate from 1-deoxy-D-xylulose 5-phosphate: step 5/6. Converts 2C-methyl-D-erythritol 2,4-cyclodiphosphate (ME-2,4cPP) into 1-hydroxy-2-methyl-2-(E)-butenyl 4-diphosphate. The protein is 4-hydroxy-3-methylbut-2-en-1-yl diphosphate synthase (flavodoxin) of Proteus mirabilis (strain HI4320).